Here is a 383-residue protein sequence, read N- to C-terminus: Protein RecA (383 aa).

Residue 79 to 86 (GPESSGKT) participates in ATP binding.

Belongs to the RecA family.

It is found in the cytoplasm. Its function is as follows. Can catalyze the hydrolysis of ATP in the presence of single-stranded DNA, the ATP-dependent uptake of single-stranded DNA by duplex DNA, and the ATP-dependent hybridization of homologous single-stranded DNAs. It interacts with LexA causing its activation and leading to its autocatalytic cleavage. The sequence is that of Protein RecA from Streptococcus gordonii (strain Challis / ATCC 35105 / BCRC 15272 / CH1 / DL1 / V288).